The sequence spans 517 residues: Maturase K (517 aa).

The protein belongs to the intron maturase 2 family. MatK subfamily.

It is found in the plastid. It localises to the chloroplast. Its function is as follows. Usually encoded in the trnK tRNA gene intron. Probably assists in splicing its own and other chloroplast group II introns. The protein is Maturase K of Veronica arvensis (Wall speedwell).